A 119-amino-acid chain; its full sequence is Large ribosomal subunit protein uL18 (119 aa).

It belongs to the universal ribosomal protein uL18 family. In terms of assembly, part of the 50S ribosomal subunit; part of the 5S rRNA/L5/L18/L25 subcomplex. Contacts the 5S and 23S rRNAs.

Its function is as follows. This is one of the proteins that bind and probably mediate the attachment of the 5S RNA into the large ribosomal subunit, where it forms part of the central protuberance. The chain is Large ribosomal subunit protein uL18 from Lactobacillus delbrueckii subsp. bulgaricus (strain ATCC 11842 / DSM 20081 / BCRC 10696 / JCM 1002 / NBRC 13953 / NCIMB 11778 / NCTC 12712 / WDCM 00102 / Lb 14).